Consider the following 102-residue polypeptide: Small ribosomal subunit protein uS10 (102 aa).

The protein belongs to the universal ribosomal protein uS10 family. As to quaternary structure, part of the 30S ribosomal subunit.

Its function is as follows. Involved in the binding of tRNA to the ribosomes. The protein is Small ribosomal subunit protein uS10 of Paracoccus denitrificans (strain Pd 1222).